We begin with the raw amino-acid sequence, 103 residues long: Large ribosomal subunit protein bL21 (103 aa).

This sequence belongs to the bacterial ribosomal protein bL21 family. In terms of assembly, part of the 50S ribosomal subunit. Contacts protein L20.

Functionally, this protein binds to 23S rRNA in the presence of protein L20. The polypeptide is Large ribosomal subunit protein bL21 (Herminiimonas arsenicoxydans).